The following is a 259-amino-acid chain: Flagellar brake protein YcgR (259 aa).

Residues 129–246 (QRREFYRLQT…DNAIQRYIFK (118 aa)) form the PilZ domain.

The protein belongs to the YcgR family. In terms of assembly, monomer. Interacts with the flagellar basal bodies.

It localises to the bacterial flagellum basal body. Acts as a flagellar brake, regulating swimming and swarming in a bis-(3'-5') cyclic diguanylic acid (c-di-GMP)-dependent manner. Binds 1 c-di-GMP dimer per subunit. Increasing levels of c-di-GMP lead to decreased motility. In Azoarcus sp. (strain BH72), this protein is Flagellar brake protein YcgR.